A 491-amino-acid chain; its full sequence is Cobyric acid synthase (491 aa).

A GATase cobBQ-type domain is found at 258–445 (ALKVAVPVLG…MHGLFGADAF (188 aa)). Residue Cys-340 is the Nucleophile of the active site. Residue His-437 is part of the active site.

Belongs to the CobB/CobQ family. CobQ subfamily.

The protein operates within cofactor biosynthesis; adenosylcobalamin biosynthesis. Functionally, catalyzes amidations at positions B, D, E, and G on adenosylcobyrinic A,C-diamide. NH(2) groups are provided by glutamine, and one molecule of ATP is hydrogenolyzed for each amidation. This is Cobyric acid synthase from Mesorhizobium japonicum (strain LMG 29417 / CECT 9101 / MAFF 303099) (Mesorhizobium loti (strain MAFF 303099)).